A 146-amino-acid chain; its full sequence is VEWSSNERSTITSLWGKINNAEIGQVALARVLIVYPWTQRYFGQFGDLSSIAAISGNPKVAAHGKVVLDGVEKAVKNLDSIKATYTKLSQLHSDTLNVDPDNFKLLGDCLTIVLSAKFGAEFTPAVQAVWQKFLSCVISALSRQYF.

The 145-residue stretch at 2–146 (EWSSNERSTI…VISALSRQYF (145 aa)) folds into the Globin domain. Residues H63 and H92 each coordinate heme b.

Belongs to the globin family. Heterotetramer of two alpha chains and two beta chains. Red blood cells.

In terms of biological role, involved in oxygen transport from gills to the various peripheral tissues. The sequence is that of Hemoglobin subunit beta-1 (hbb1) from Muraena helena (Mediterranean moray).